Reading from the N-terminus, the 38-residue chain is U-theraphotoxin-Aju1a (38 aa).

Intrachain disulfides connect C3–C24, C7–C30, and C16–C35.

Expressed by the venom gland.

Its subcellular location is the secreted. Its function is as follows. Has strong antifungal activity against C.albicans MDM8, C.krusei IOC 4559 (MIC=2.5-5 uM), C.glabrata IOC 45658 (MIC=2.5-5 uM), C.albicans IOC 45588 (MIC=2.5-5 uM), C.parapsilosis IOC 456416 (MIC=2.5-5 uM), C.tropicalis IOC 45608 (MIC=2.5-5 uM), C.guilliermondii IOC 455716 (MIC=2.5-5 uM) and A.niger (MIC=5-10 uM). Lacks antifungal activity against B.bassiana. Has no antibacterial effect against Gram-positive bacteria M.luteus, S.epidermidis, S.aureus or against Gram-negative bacteria E.coli and P.aeruginosa. Has no hemolytic activity against human erythrocytes. Probable ion channel inhibitor. This chain is U-theraphotoxin-Aju1a, found in Avicularia juruensis (Yellow-banded pinktoe).